The sequence spans 141 residues: Nucleoside diphosphate kinase (141 aa).

ATP-binding residues include K11, F59, R87, T93, R104, and N114. The active-site Pros-phosphohistidine intermediate is H117.

This sequence belongs to the NDK family. As to quaternary structure, homotetramer. Mg(2+) is required as a cofactor.

The protein localises to the cytoplasm. The catalysed reaction is a 2'-deoxyribonucleoside 5'-diphosphate + ATP = a 2'-deoxyribonucleoside 5'-triphosphate + ADP. It carries out the reaction a ribonucleoside 5'-diphosphate + ATP = a ribonucleoside 5'-triphosphate + ADP. In terms of biological role, major role in the synthesis of nucleoside triphosphates other than ATP. The ATP gamma phosphate is transferred to the NDP beta phosphate via a ping-pong mechanism, using a phosphorylated active-site intermediate. In Acidithiobacillus ferrooxidans (strain ATCC 53993 / BNL-5-31) (Leptospirillum ferrooxidans (ATCC 53993)), this protein is Nucleoside diphosphate kinase.